A 260-amino-acid chain; its full sequence is Pyridoxine 5'-phosphate synthase (260 aa).

Asn-15 contributes to the 3-amino-2-oxopropyl phosphate binding site. 17–18 (DH) is a 1-deoxy-D-xylulose 5-phosphate binding site. Arg-26 provides a ligand contact to 3-amino-2-oxopropyl phosphate. Residue His-51 is the Proton acceptor of the active site. 1-deoxy-D-xylulose 5-phosphate-binding residues include Arg-53 and His-58. Catalysis depends on Glu-78, which acts as the Proton acceptor. Thr-108 contacts 1-deoxy-D-xylulose 5-phosphate. His-199 acts as the Proton donor in catalysis. 3-amino-2-oxopropyl phosphate-binding positions include Gly-200 and 221–222 (GH).

It belongs to the PNP synthase family. Homooctamer; tetramer of dimers.

The protein localises to the cytoplasm. It catalyses the reaction 3-amino-2-oxopropyl phosphate + 1-deoxy-D-xylulose 5-phosphate = pyridoxine 5'-phosphate + phosphate + 2 H2O + H(+). Its pathway is cofactor biosynthesis; pyridoxine 5'-phosphate biosynthesis; pyridoxine 5'-phosphate from D-erythrose 4-phosphate: step 5/5. Its function is as follows. Catalyzes the complicated ring closure reaction between the two acyclic compounds 1-deoxy-D-xylulose-5-phosphate (DXP) and 3-amino-2-oxopropyl phosphate (1-amino-acetone-3-phosphate or AAP) to form pyridoxine 5'-phosphate (PNP) and inorganic phosphate. This chain is Pyridoxine 5'-phosphate synthase, found in Cupriavidus necator (strain ATCC 17699 / DSM 428 / KCTC 22496 / NCIMB 10442 / H16 / Stanier 337) (Ralstonia eutropha).